Reading from the N-terminus, the 143-residue chain is MPTSATAVAPSTGSVQKKDQDWRAILSPEQFRVLREKGTENRGKGEYTKLFDDGIYSCAGCATPLYKSTTKFDSGCGWPSFFDAIPGAIKQTPEAGGRRMEITCAACDGHLGHVVKGEGFPTATDERHCVNSVSLKFSEISSQ.

The MsrB domain maps to 19–140 (DQDWRAILSP…NSVSLKFSEI (122 aa)). The Zn(2+) site is built by C58, C61, C104, and C107. A disulfide bridge links C76 with C129. C129 functions as the Nucleophile in the catalytic mechanism.

It belongs to the MsrB Met sulfoxide reductase family. Zn(2+) serves as cofactor.

Its subcellular location is the cytoplasm. It localises to the cytosol. It catalyses the reaction L-methionyl-[protein] + [thioredoxin]-disulfide + H2O = L-methionyl-(R)-S-oxide-[protein] + [thioredoxin]-dithiol. Its function is as follows. Catalyzes the reduction of methionine sulfoxide (MetSO) to methionine in proteins. Plays a protective role against oxidative stress by restoring activity to proteins that have been inactivated by methionine oxidation. MSRB family specifically reduces the MetSO R-enantiomer. This chain is Peptide methionine sulfoxide reductase B9 (MSRB9), found in Arabidopsis thaliana (Mouse-ear cress).